We begin with the raw amino-acid sequence, 508 residues long: Erythropoietin receptor (508 aa).

Positions 1–24 (MDHLGASLWPQVGSLCLLLAGAAW) are cleaved as a signal peptide. The Extracellular segment spans residues 25–250 (APPPNLPDPK…SLLTPSDLDP (226 aa)). A disulfide bridge links Cys52 with Cys62. Asn76 carries an N-linked (GlcNAc...) asparagine glycan. A disulfide bond links Cys91 and Cys107. The Fibronectin type-III domain maps to 147 to 247 (APVGLVARLA…EPVSLLTPSD (101 aa)). Positions 233 to 237 (WSAWS) match the WSXWS motif motif. Residues 251 to 273 (LILTLSLILVVILVLLTVLALLS) traverse the membrane as a helical segment. Over 274–508 (HRRALKQKIW…PLPPSYVACS (235 aa)) the chain is Cytoplasmic. A Glycyl lysine isopeptide (Lys-Gly) (interchain with G-Cter in ubiquitin) cross-link involves residue Lys281. Residues 282 to 290 (IWPGIPSPE) carry the Box 1 motif motif. Tyr368 and Tyr426 each carry phosphotyrosine; by JAK2. The ITIM motif signature appears at 452–457 (LKYLYL). Lys453 participates in a covalent cross-link: Glycyl lysine isopeptide (Lys-Gly) (interchain with G-Cter in ubiquitin). Phosphotyrosine; by JAK2 occurs at positions 454, 456, 468, 485, 489, and 504. Residues 454 to 456 (YLY) form a required for high-affinity SOCS3 binding region. Residues 467-494 (DYSSGDSQGAQGGLSDGPYSNPYENSLI) form a disordered region.

This sequence belongs to the type I cytokine receptor family. Type 1 subfamily. Forms homodimers on EPO stimulation. The tyrosine-phosphorylated form interacts with several SH2 domain-containing proteins including LYN, the adapter protein SH2B2, PTPN6, PTPN11, JAK2, PI3 kinases, STAT5A/B, SOCS3, CRKL. Interacts with INPP5D/SHIP1. SH2B2 binding inhibits the JAK-STAT signaling. Interacts with RHEX; this interaction occurs in a erythropoietin (EPO)-dependent manner. Interacts with ATXN2L. On EPO stimulation, phosphorylated on C-terminal tyrosine residues by JAK2. The phosphotyrosine motifs are also recruitment sites for several SH2-containing proteins and adapter proteins which mediate cell proliferation. Phosphorylation on Tyr-454 is required for PTPN6 interaction, Tyr-426 for PTPN11. Tyr-426 is also required for SOCS3 binding, but Tyr-454/Tyr-456 motif is the preferred binding site. Post-translationally, ubiquitinated by the ECS(SOCS2) complex following ligand-binding and phosphorylation by JAK2, leading to its degradation by the proteasome. Regulation by the ECS(SOCS2) complex acts as a negative feedback loop of erythropoietin-mediated signaling pathway. Ubiquitination at Lys-281 mediates receptor internalization, whereas ubiquitination at Lys-453 promotes trafficking of activated receptors to the lysosomes for degradation. Ubiquitinated by NOSIP; appears to be either multi-monoubiquitinated or polyubiquitinated. Ubiquitination mediates proliferation and survival of EPO-dependent cells. In terms of tissue distribution, erythroid cells and erythroid progenitor cells. As to expression, isoform EPOR-F is the most abundant form in EPO-dependent erythroleukemia cells and in late-stage erythroid progenitors. Isoform EPOR-S and isoform EPOR-T are the predominant forms in bone marrow. In terms of tissue distribution, isoform EPOR-S and isoform EPOR-T are the predominant forms in bone marrow. Isoform EPOR-T is the most abundant from in early-stage erythroid progenitor cells.

Its subcellular location is the cell membrane. It localises to the secreted. Functionally, receptor for erythropoietin, which mediates erythropoietin-induced erythroblast proliferation and differentiation. Upon EPO stimulation, EPOR dimerizes triggering the JAK2/STAT5 signaling cascade. In some cell types, can also activate STAT1 and STAT3. May also activate the LYN tyrosine kinase. Acts as a dominant-negative receptor of EPOR-mediated signaling. The polypeptide is Erythropoietin receptor (Homo sapiens (Human)).